The primary structure comprises 149 residues: uncharacterized protein (149 aa).

This is an uncharacterized protein from Escherichia coli (strain K12).